We begin with the raw amino-acid sequence, 131 residues long: Small ribosomal subunit protein eS8 (131 aa).

The segment at 15–36 (PSGGKKGRVRKTKKKALGGGPP) is disordered. The span at 17–30 (GGKKGRVRKTKKKA) shows a compositional bias: basic residues.

Belongs to the eukaryotic ribosomal protein eS8 family. As to quaternary structure, part of the 30S ribosomal subunit.

The protein is Small ribosomal subunit protein eS8 of Pyrobaculum calidifontis (strain DSM 21063 / JCM 11548 / VA1).